A 263-amino-acid chain; its full sequence is Cytochrome c oxidase subunit 3 (263 aa).

A run of 7 helical transmembrane segments spans residues 7–27 (ITVLINIFFIFSNYNNIKAHL), 44–64 (FSVGILFTSNPIIFIIFVYSI), 78–98 (GMLSIIISEAILFITYFWGIL), 120–140 (LILTITFILASASCMTACLQF), 145–165 (GMSLEISSIVFIIYLLGECFA), 191–211 (VTGLHFSHVIVGLLLLLIYFI), and 241–261 (ITILYWHFVEIVWLFIEYFFY).

It belongs to the cytochrome c oxidase subunit 3 family. Component of the cytochrome c oxidase (complex IV, CIV), a multisubunit enzyme composed of a catalytic core of 3 subunits and several supernumerary subunits. The complex exists as a monomer or a dimer and forms supercomplexes (SCs) in the inner mitochondrial membrane with ubiquinol-cytochrome c oxidoreductase (cytochrome b-c1 complex, complex III, CIII).

The protein localises to the mitochondrion inner membrane. The catalysed reaction is 4 Fe(II)-[cytochrome c] + O2 + 8 H(+)(in) = 4 Fe(III)-[cytochrome c] + 2 H2O + 4 H(+)(out). Its function is as follows. Component of the cytochrome c oxidase, the last enzyme in the mitochondrial electron transport chain which drives oxidative phosphorylation. The respiratory chain contains 3 multisubunit complexes succinate dehydrogenase (complex II, CII), ubiquinol-cytochrome c oxidoreductase (cytochrome b-c1 complex, complex III, CIII) and cytochrome c oxidase (complex IV, CIV), that cooperate to transfer electrons derived from NADH and succinate to molecular oxygen, creating an electrochemical gradient over the inner membrane that drives transmembrane transport and the ATP synthase. Cytochrome c oxidase is the component of the respiratory chain that catalyzes the reduction of oxygen to water. Electrons originating from reduced cytochrome c in the intermembrane space (IMS) are transferred via the dinuclear copper A center (CU(A)) of subunit 2 and heme A of subunit 1 to the active site in subunit 1, a binuclear center (BNC) formed by heme A3 and copper B (CU(B)). The BNC reduces molecular oxygen to 2 water molecules using 4 electrons from cytochrome c in the IMS and 4 protons from the mitochondrial matrix. The polypeptide is Cytochrome c oxidase subunit 3 (COIII) (Plasmodium vivax).